The primary structure comprises 1226 residues: MDREERKTINQGQEDEMEIYGYNLSRWKLAIVSLGVICSGGFLLLLLYWMPEWRVKATCVRAAIKDCEVVLLRTTDEFKMWFCAKIRVLSLETYPVSSPKSMSNKLSNGHAVCLIENPTEENRHRISKYSQTESQQIRYFTHHSVKYFWNDTIHNFDFLKGLDEGVSCTSIYEKHSAGLTKGMHAYRKLLYGVNEIAVKVPSVFKLLIKEVLNPFYIFQLFSVILWSTDEYYYYALAIVVMSIVSIVSSLYSIRKQYVMLHDMVATHSTVRVSVCRVNEEIEEIFSTDLVPGDVMVIPLNGTIMPCDAVLINGTCIVNESMLTGESVPVTKTNLPNPSVDVKGIGDELYNPETHKRHTLFCGTTVIQTRFYTGELVKAIVVRTGFSTSKGQLVRSILYPKPTDFKLYRDAYLFLLCLVAVAGIGFIYTIINSILNEVQVGVIIIESLDIITITVPPALPAAMTAGIVYAQRRLKKIGIFCISPQRINICGQLNLVCFDKTGTLTEDGLDLWGIQRVENARFLSPEENVCNEMLVKSQFVACMATCHSLTKIEGVLSGDPLDLKMFEAIGWILEEATEEETALHNRIMPTVVRPPKQLLPESTPAGNQEMELFELPATYEIGIVRQFPFSSALQRMSVVARVLGDRKMDAYMKGAPEAIAGLCKPETVPVDFQNVLEDFTKQGFRVIALAHRKLESKLTWHKVQNISRDAIENNMDFMGLIIMQNKLKQETPAVLEDLHKANIRTVMVTGDSMLTAVSVARDCGMILPQDKVIIAEALPPKDGKVAKINWHYADSLTQCSHPSAIDPEAIPVKLVHDSLEDLQMTRYHFAMNGKSFSVILEHFQDLVPKLMLHGTVFARMAPDQKTQLIEALQNVDYFVGMCGDGANDCGALKRAHGGISLSELEASVASPFTSKTPSISCVPNLIREGRAALITSFCVFKFMALYSIIQYFSVTLLYSILSNLGDFQFLFIDLAIILVVVFTMSLNPAWKELVAQRPPSGLISGALLFSVLSQIIICIGFQSLGFFWVKQQPWYEVWHPKSDACNTTGSGFWNSSHVDNETELDEHNIQNYENTTVFFISSFQYLIVAIAFSKGKPFRQPCYKNYFFVFSVIFLYIFILFIMLYPVASVDQVLQIVCVPYQWRVTMLIIVLVNAFVSITVEESVDRWGKCCLPWALGCRKKTPKAKYMYLAQELLVDPEWPPKPQTTTEAKALVKENGSCQIITIT.

Residues 1-28 lie on the Cytoplasmic side of the membrane; it reads MDREERKTINQGQEDEMEIYGYNLSRWK. Residues 29–49 lie within the membrane without spanning it; that stretch reads LAIVSLGVICSGGFLLLLLYW. The Cytoplasmic segment spans residues 50 to 205; the sequence is MPEWRVKATC…IAVKVPSVFK (156 aa). Ser98 is modified (phosphoserine). Residues 206–226 form a helical membrane-spanning segment; it reads LLIKEVLNPFYIFQLFSVILW. The Lumenal segment spans residues 227 to 232; that stretch reads STDEYY. Residues 233-253 traverse the membrane as a helical segment; it reads YYALAIVVMSIVSIVSSLYSI. Residues 254 to 409 lie on the Cytoplasmic side of the membrane; the sequence is RKQYVMLHDM…KPTDFKLYRD (156 aa). The helical transmembrane segment at 410–430 threads the bilayer; it reads AYLFLLCLVAVAGIGFIYTII. At 431 to 448 the chain is on the lumenal side; sequence NSILNEVQVGVIIIESLD. Residues 449 to 469 form a helical membrane-spanning segment; the sequence is IITITVPPALPAAMTAGIVYA. The Cytoplasmic portion of the chain corresponds to 470–940; that stretch reads QRRLKKIGIF…ALITSFCVFK (471 aa). Asp498 (4-aspartylphosphate intermediate) is an active-site residue. Residues Asp498 and Thr500 each contribute to the Mg(2+) site. Residues 498–500, Phe628, Arg684, and Asp750 contribute to the ATP site; that span reads DKT. At Ser817 the chain carries Phosphoserine. Residues Asp883 and Asp887 each contribute to the Mg(2+) site. 883–887 provides a ligand contact to ATP; sequence DGAND. Residues 941–961 form a helical membrane-spanning segment; sequence FMALYSIIQYFSVTLLYSILS. A topological domain (lumenal) is located at residue Asn962. The chain crosses the membrane as a helical span at residues 963–983; the sequence is LGDFQFLFIDLAIILVVVFTM. Topologically, residues 984–999 are cytoplasmic; it reads SLNPAWKELVAQRPPS. The helical transmembrane segment at 1000-1020 threads the bilayer; it reads GLISGALLFSVLSQIIICIGF. Over 1021–1073 the chain is Lumenal; sequence QSLGFFWVKQQPWYEVWHPKSDACNTTGSGFWNSSHVDNETELDEHNIQNYEN. A helical membrane pass occupies residues 1074–1094; sequence TTVFFISSFQYLIVAIAFSKG. Residues 1095-1105 are Cytoplasmic-facing; the sequence is KPFRQPCYKNY. Residues 1106 to 1126 form a helical membrane-spanning segment; it reads FFVFSVIFLYIFILFIMLYPV. At 1127-1143 the chain is on the lumenal side; it reads ASVDQVLQIVCVPYQWR. A helical transmembrane segment spans residues 1144 to 1164; the sequence is VTMLIIVLVNAFVSITVEESV. The Cytoplasmic portion of the chain corresponds to 1165–1226; the sequence is DRWGKCCLPW…NGSCQIITIT (62 aa).

It belongs to the cation transport ATPase (P-type) (TC 3.A.3) family. Type V subfamily. As to expression, broadly expressed.

The protein resides in the recycling endosome membrane. The protein localises to the early endosome membrane. Its subcellular location is the late endosome membrane. It carries out the reaction putrescine(out) + ATP + H2O = putrescine(in) + ADP + phosphate + H(+). Its function is as follows. ATP-driven pump involved in endocytosis-dependent polyamine transport. Uses ATP as an energy source to transfer polyamine precursor putrescine from the endosomal compartment to the cytosol. The sequence is that of Polyamine-transporting ATPase 13A3 from Homo sapiens (Human).